The chain runs to 377 residues: Alanine racemase (377 aa).

The Proton acceptor; specific for D-alanine role is filled by lysine 33. Lysine 33 bears the N6-(pyridoxal phosphate)lysine mark. Arginine 134 provides a ligand contact to substrate. Tyrosine 267 acts as the Proton acceptor; specific for L-alanine in catalysis. Methionine 315 serves as a coordination point for substrate.

It belongs to the alanine racemase family. It depends on pyridoxal 5'-phosphate as a cofactor.

The catalysed reaction is L-alanine = D-alanine. The protein operates within amino-acid biosynthesis; D-alanine biosynthesis; D-alanine from L-alanine: step 1/1. Its function is as follows. Catalyzes the interconversion of L-alanine and D-alanine. May also act on other amino acids. The protein is Alanine racemase (alr) of Treponema pallidum subsp. pallidum (strain SS14).